Reading from the N-terminus, the 153-residue chain is Ribosomal RNA large subunit methyltransferase H (153 aa).

S-adenosyl-L-methionine contacts are provided by residues Leu75, Gly102, and 121 to 126; that span reads LSKLTL.

It belongs to the RNA methyltransferase RlmH family. As to quaternary structure, homodimer.

The protein resides in the cytoplasm. It catalyses the reaction pseudouridine(1915) in 23S rRNA + S-adenosyl-L-methionine = N(3)-methylpseudouridine(1915) in 23S rRNA + S-adenosyl-L-homocysteine + H(+). Its function is as follows. Specifically methylates the pseudouridine at position 1915 (m3Psi1915) in 23S rRNA. The polypeptide is Ribosomal RNA large subunit methyltransferase H (Campylobacter jejuni (strain RM1221)).